The chain runs to 494 residues: Maintenance of mitochondrial morphology protein 1 (494 aa).

Residues 1–25 (MGDDQSLRSTVAENDISANLSFTQG) are Lumenal-facing. Residues 26–46 (FLLGQLSVVLLIGAFIKFFIF) traverse the membrane as a helical segment. Residues 47–494 (GEAPPPPSRG…GTLPGGAAAN (448 aa)) lie on the Cytoplasmic side of the membrane. Disordered regions lie at residues 53–99 (PSRG…VPSS), 278–330 (PPLH…KSNV), and 395–494 (RTGV…AAAN). A compositionally biased stretch (basic residues) spans 57–67 (LSHRASTHRRS). Composition is skewed to polar residues over residues 68-81 (NSIY…GTSR) and 88-99 (STSNVLRPVPSS). The SMP-LTD domain occupies 134–387 (QPESLDWFNV…EPRVQVVGLP (254 aa)). Residues 278-290 (PPLHTPSPSPSPP) are compositionally biased toward pro residues. 2 stretches are compositionally biased toward polar residues: residues 300–318 (THPT…NAQE) and 406–415 (TGSNAASRSA). The segment covering 425–437 (RADDIGREPDGLR) has biased composition (basic and acidic residues).

The protein belongs to the MMM1 family. Homodimer. Component of the ER-mitochondria encounter structure (ERMES) or MDM complex, composed of mmm1, mdm10, mdm12 and mdm34. A mmm1 homodimer associates with one molecule of mdm12 on each side in a pairwise head-to-tail manner, and the SMP-LTD domains of mmm1 and mdm12 generate a continuous hydrophobic tunnel for phospholipid trafficking.

It is found in the endoplasmic reticulum membrane. Its function is as follows. Component of the ERMES/MDM complex, which serves as a molecular tether to connect the endoplasmic reticulum (ER) and mitochondria. Components of this complex are involved in the control of mitochondrial shape and protein biogenesis, and function in nonvesicular lipid trafficking between the ER and mitochondria. The mdm12-mmm1 subcomplex functions in the major beta-barrel assembly pathway that is responsible for biogenesis of all outer membrane beta-barrel proteins, and acts in a late step after the SAM complex. The mdm10-mdm12-mmm1 subcomplex further acts in the TOM40-specific pathway after the action of the mdm12-mmm1 complex. Essential for establishing and maintaining the structure of mitochondria and maintenance of mtDNA nucleoids. The sequence is that of Maintenance of mitochondrial morphology protein 1 from Aspergillus oryzae (strain ATCC 42149 / RIB 40) (Yellow koji mold).